Here is a 552-residue protein sequence, read N- to C-terminus: Urocanate hydratase (552 aa).

NAD(+) contacts are provided by residues 48–49 (GG), Gln-126, 172–174 (GMG), Asp-192, 238–239 (NA), 259–263 (QTSAH), 268–269 (YL), and Tyr-317. Cys-405 is an active-site residue. Gly-487 contacts NAD(+).

The protein belongs to the urocanase family. NAD(+) is required as a cofactor.

It localises to the cytoplasm. It catalyses the reaction 4-imidazolone-5-propanoate = trans-urocanate + H2O. It functions in the pathway amino-acid degradation; L-histidine degradation into L-glutamate; N-formimidoyl-L-glutamate from L-histidine: step 2/3. Catalyzes the conversion of urocanate to 4-imidazolone-5-propionate. The protein is Urocanate hydratase of Streptomyces griseus subsp. griseus (strain JCM 4626 / CBS 651.72 / NBRC 13350 / KCC S-0626 / ISP 5235).